A 2789-amino-acid polypeptide reads, in one-letter code: Multiple epidermal growth factor-like domains protein 8 (2789 aa).

The signal sequence occupies residues 1–27 (MALGGALALALALALAVLGPLSLRVLA). At 28–2591 (GDCKGQRQVL…FFRQDQAHID (2564 aa)) the chain is on the extracellular side. Cystine bridges form between C30–C57, C142–C152, C146–C158, C174–C184, C178–C191, and C193–C202. One can recognise a CUB 1 domain in the interval 30 to 140 (CKGQRQVLRE…LGFNASFRFS (111 aa)). N-linked (GlcNAc...) asparagine glycosylation is present at N50. EGF-like domains are found at residues 138 to 168 (RFSL…GGPD) and 170 to 203 (GLQE…RACD). 6 Kelch repeats span residues 241 to 287 (LLAV…AVAW), 290 to 338 (LLVL…AGHA), 346 to 399 (WLYV…FHAP), 402 to 453 (TLLV…FHTA), 459 to 511 (YMVV…APPS), and 525 to 575 (VLLV…SRDP). PSI domains follow at residues 561-613 (YCSM…SDCQ), 847-899 (ACTS…ALCP), and 900-947 (LCEE…EECP). N1048 carries N-linked (GlcNAc...) asparagine glycosylation. Residues 1074-1115 (DVDECRLGLARCHPRATCLNTPLSYECHCQRGYQGDGITHCN) enclose the EGF-like 3; calcium-binding domain. 16 disulfide bridges follow: C1078–C1091, C1085–C1100, C1102–C1114, C1163–C1171, C1165–C1179, C1182–C1191, C1194–C1208, C1211–C1224, C1213–C1231, C1233–C1242, C1245–C1259, C1263–C1302, C1336–C1367, C1407–C1421, C1415–C1433, and C1435–C1444. 2 Laminin EGF-like domains span residues 1163-1210 (CGCS…GCRP) and 1211-1261 (CQCN…SCFR). N-linked (GlcNAc...) asparagine glycosylation is present at N1226. The CUB 2 domain maps to 1263-1405 (CGGRALLTNV…WGFNASVGSA (143 aa)). N1271 carries an N-linked (GlcNAc...) asparagine glycan. Residue T1353 is modified to Phosphothreonine. Residues 1403–1445 (GSARCGSGGPGSCPVPQECVPQDGAAGAGLCRCPQGWAGPHCR) form the EGF-like 4 domain. Kelch repeat units follow at residues 1522–1570 (TLWM…SFHA), 1580–1629 (AMYL…TARR), 1632–1679 (SLLL…SAVY), 1685–1735 (SLYV…HASA), 1740–1787 (TMVV…ESVA), and 1796–1841 (RLYI…WCHG). 4 PSI domains span residues 1820 to 1860 (PCRL…PPCS), 1868 to 1923 (ECRR…NDCR), 2004 to 2062 (PCHL…ESCS), and 2064 to 2121 (GCAQ…LSCP). N-linked (GlcNAc...) asparagine glycosylation is present at N2010. Residues 2122 to 2160 (PEDECANGHHDCNETQNCHDQPHGYECSCKTGYTMDNVT) enclose the EGF-like 5 domain. Disulfide bonds link C2126–C2139 and C2133–C2148. N-linked (GlcNAc...) asparagine glycosylation is found at N2158 and N2173. 8 disulfides stabilise this stretch: C2197/C2205, C2199/C2214, C2217/C2226, C2229/C2243, C2324/C2333, C2326/C2341, C2343/C2368, and C2371/C2385. Laminin EGF-like domains follow at residues 2197–2245 (CRCN…TCRP) and 2324–2387 (CQCN…QCYR). The disordered stretch occupies residues 2468–2508 (VHIQPPPPPPPPPPPADGVPRVAADLGGLGTGSGSGSPVEP). Residues 2471–2484 (QPPPPPPPPPPPAD) are compositionally biased toward pro residues. Residues 2592 to 2612 (LFVFFSVFFSCFFLFLSLCVL) traverse the membrane as a helical segment. Residues 2613 to 2789 (LWKAKQALDQ…SQDNLTSMSL (177 aa)) are Cytoplasmic-facing. Residues 2762–2776 (GGAGGSGHGGGGGRK) are compositionally biased toward gly residues. Positions 2762–2789 (GGAGGSGHGGGGGRKGLLSQDNLTSMSL) are disordered. Residues 2780 to 2789 (SQDNLTSMSL) show a composition bias toward polar residues.

As to expression, highest expression in brain, testis and kidney.

It is found in the membrane. Acts as a negative regulator of hedgehog signaling. The polypeptide is Multiple epidermal growth factor-like domains protein 8 (Megf8) (Mus musculus (Mouse)).